We begin with the raw amino-acid sequence, 314 residues long: Olfactory receptor 2Z1 (314 aa).

Residues 1 to 25 are Extracellular-facing; the sequence is MGDVNQSVASDFILVGLFSHSGSRQ. Asn-5 carries N-linked (GlcNAc...) asparagine glycosylation. The chain crosses the membrane as a helical span at residues 26 to 49; it reads LLFSLVAVMFVIGLLGNTVLLFLI. Over 50–57 the chain is Cytoplasmic; sequence RVDSRLHT. A helical transmembrane segment spans residues 58-79; the sequence is PMYFLLSQLSLFDIGCPMVTIP. Residues 80-100 are Extracellular-facing; that stretch reads KMASDFLRGEGATSYGGGAAQ. Residues 101–120 form a helical membrane-spanning segment; sequence IFFLTLMGVAEGVLLVLMSY. At 121 to 139 the chain is on the cytoplasmic side; it reads DRYVAVCQPLQYPVLMRRQ. A helical membrane pass occupies residues 140–158; it reads VCLLMMGSSWVVGVLNASI. The Extracellular portion of the chain corresponds to 159-195; the sequence is QTSITLHFPYCASRIVDHFFCEVPALLKLSCADTCAY. Residues 196–219 traverse the membrane as a helical segment; that stretch reads EMALSTSGVLILMLPLSLIATSYG. Residues 220 to 236 are Cytoplasmic-facing; it reads HVLQAVLSMRSEEARHK. Residues 237–259 traverse the membrane as a helical segment; the sequence is AVTTCSSHITVVGLFYGAAVFMY. The Extracellular segment spans residues 260 to 272; sequence MVPCAYHSPQQDN. The helical transmembrane segment at 273–292 threads the bilayer; sequence VVSLFYSLVTPTLNPLIYSL. The Cytoplasmic segment spans residues 293–314; the sequence is RNPEVWMALVKVLSRAGLRQMC.

Belongs to the G-protein coupled receptor 1 family.

The protein resides in the cell membrane. In terms of biological role, odorant receptor. The protein is Olfactory receptor 2Z1 (OR2Z1) of Homo sapiens (Human).